The following is a 345-amino-acid chain: Putative membrane protein ORF59 (345 aa).

A run of 4 helical transmembrane segments spans residues 46–63, 101–118, 147–165, and 265–286; these read LVFA…MMLI, IVFV…LVFL, IFGI…FSIL, and VVPV…WMVI.

It is found in the membrane. The polypeptide is Putative membrane protein ORF59 (ORF59) (Ictalurid herpesvirus 1 (strain Auburn) (IcHV-1)).